We begin with the raw amino-acid sequence, 393 residues long: Putative zinc metalloprotease Rip3 (393 aa).

The next 2 membrane-spanning stretches (helical) occupy residues 10–30 and 45–65; these read IAGFVVNVHWSVLVILWLFTW and AVVYWLLGAGGAVMLLASLLA. His-66 provides a ligand contact to Zn(2+). The active site involves Glu-67. His-70 lines the Zn(2+) pocket. 4 consecutive transmembrane segments (helical) span residues 77–97, 108–128, 136–156, and 207–227; these read AGVSVESVTLWLFGGVTALGG, IAFAGPATSLALSATFGALAI, PAIVISVAWWLATVNLLLGLF, and FVAGGLVGGVWLAFIGWFIFA. CBS domains are found at residues 251–308 and 315–376; these read MTAQ…RRST and ALPL…AQPE.

Belongs to the peptidase M50B family. It depends on Zn(2+) as a cofactor.

The protein localises to the cell membrane. In Mycobacterium tuberculosis (strain ATCC 35801 / TMC 107 / Erdman), this protein is Putative zinc metalloprotease Rip3 (rip3).